The chain runs to 145 residues: Small ribosomal subunit protein uS9 (145 aa).

Positions 1–13 (MATDQHSNKSNVS) are enriched in polar residues. The tract at residues 1 to 24 (MATDQHSNKSNVSAARKPLSPSPT) is disordered.

Belongs to the universal ribosomal protein uS9 family.

It is found in the cytoplasm. This Lupinus polyphyllus (Large-leaved lupine) protein is Small ribosomal subunit protein uS9 (RPS16).